The following is a 224-amino-acid chain: Oxalate oxidase GF-3.8 (224 aa).

The first 23 residues, 1-23, serve as a signal peptide directing secretion; sequence MGYSKNIASGMFAMLLLASAVLS. Cys33 and Cys49 are disulfide-bonded. The Cupin type-1 domain occupies 63–214; sequence SKLAKAGNTS…ALRVEAGVVE (152 aa). Asn70 and Asn75 each carry an N-linked (GlcNAc...) asparagine glycan. Positions 111, 113, 118, and 160 each coordinate Mn(2+).

The protein belongs to the germin family. As to quaternary structure, oligomer (believed to be a pentamer but probably hexamer).

The protein resides in the secreted. It is found in the extracellular space. Its subcellular location is the apoplast. The protein localises to the cytoplasm. It localises to the cell wall. The enzyme catalyses oxalate + O2 + 2 H(+) = H2O2 + 2 CO2. In terms of biological role, produces developmental and stress-related release of hydrogen peroxide in the apoplast. May play an important role in several aspects of plant growth and defense mechanisms. The sequence is that of Oxalate oxidase GF-3.8 from Triticum aestivum (Wheat).